We begin with the raw amino-acid sequence, 219 residues long: Elongation factor Ts (219 aa).

Positions 82 to 85 (TDFV) are involved in Mg(2+) ion dislocation from EF-Tu.

Belongs to the EF-Ts family.

It localises to the cytoplasm. Functionally, associates with the EF-Tu.GDP complex and induces the exchange of GDP to GTP. It remains bound to the aminoacyl-tRNA.EF-Tu.GTP complex up to the GTP hydrolysis stage on the ribosome. This is Elongation factor Ts from Anaeromyxobacter sp. (strain K).